The sequence spans 150 residues: Endoribonuclease YbeY (150 aa).

Zn(2+) is bound by residues H113, H117, and H123.

This sequence belongs to the endoribonuclease YbeY family. Zn(2+) is required as a cofactor.

It is found in the cytoplasm. Its function is as follows. Single strand-specific metallo-endoribonuclease involved in late-stage 70S ribosome quality control and in maturation of the 3' terminus of the 16S rRNA. This chain is Endoribonuclease YbeY, found in Wolbachia sp. subsp. Drosophila simulans (strain wRi).